The sequence spans 365 residues: Tartrate dehydrogenase/decarboxylase (365 aa).

Asp225, Asp250, and Asp254 together coordinate Mn(2+).

Belongs to the isocitrate and isopropylmalate dehydrogenases family. In terms of assembly, homodimer. Requires Mg(2+) as cofactor. Mn(2+) serves as cofactor. The cofactor is K(+).

Its subcellular location is the cytoplasm. It carries out the reaction tartrate + NAD(+) = 2-hydroxy-3-oxosuccinate + NADH + H(+). It catalyses the reaction (2R,3S)-tartrate + NAD(+) = 2-hydroxy-3-oxosuccinate + NADH + H(+). The catalysed reaction is (2R,3R)-tartrate + NAD(+) = 2-hydroxy-3-oxosuccinate + NADH + H(+). The enzyme catalyses (2R,3R)-tartrate + H(+) = (R)-glycerate + CO2. It carries out the reaction (R)-malate + NAD(+) = pyruvate + CO2 + NADH. It participates in carbohydrate acid metabolism; tartrate degradation; 2-hydroxy-3-oxosuccinate from L-tartrate: step 1/1. Its pathway is carbohydrate acid metabolism; tartrate degradation; 2-hydroxy-3-oxosuccinate from meso-tartrate: step 1/1. It functions in the pathway carbohydrate acid metabolism; tartrate degradation; D-glycerate from L-tartrate: step 1/1. Has multiple catalytic activities. Apart from catalyzing the oxidation of (+)-tartrate to oxaloglycolate, also converts meso-tartrate to D-glycerate and catalyzes the oxidative decarboxylation of D-malate to pyruvate. This is Tartrate dehydrogenase/decarboxylase from Pseudomonas putida (Arthrobacter siderocapsulatus).